The following is a 229-amino-acid chain: Cytosolic-abundant heat soluble protein 107838 (229 aa).

Residues Met-1–Glu-29 are disordered. A coiled-coil region spans residues Leu-109–Arg-145. CAHS motif regions lie at residues Tyr-124–Gln-142 and Gln-161–Glu-179. Polar residues predominate over residues Ser-202–Gln-218. Residues Ser-202–Gln-229 are disordered. The span at Lys-219–Gln-229 shows a compositional bias: basic and acidic residues.

The protein belongs to the Cytosolic-abundant heat soluble protein (CAHS) family.

It is found in the cytoplasm. Its function is as follows. CAHS proteins are cytosolic heat soluble proteins that seem to contribute to the anhydrobiosis in tardigrades, but their specific mechanisms are yet to be identified. It is possible that protection during anhydrobiosis might occur via the stabilization of vitrifying small molecules such as sugars, but not via the direct glass transition of CAHS proteins themselves. The chain is Cytosolic-abundant heat soluble protein 107838 from Paramacrobiotus richtersi (Water bear).